The primary structure comprises 359 residues: Peptide chain release factor 1 (359 aa).

An N5-methylglutamine modification is found at Q235.

The protein belongs to the prokaryotic/mitochondrial release factor family. Post-translationally, methylated by PrmC. Methylation increases the termination efficiency of RF1.

It localises to the cytoplasm. Its function is as follows. Peptide chain release factor 1 directs the termination of translation in response to the peptide chain termination codons UAG and UAA. This Polynucleobacter asymbioticus (strain DSM 18221 / CIP 109841 / QLW-P1DMWA-1) (Polynucleobacter necessarius subsp. asymbioticus) protein is Peptide chain release factor 1.